Here is a 377-residue protein sequence, read N- to C-terminus: Succinyl-diaminopimelate desuccinylase (377 aa).

Histidine 66 lines the Zn(2+) pocket. The active site involves aspartate 68. Aspartate 99 is a binding site for Zn(2+). The Proton acceptor role is filled by glutamate 133. Glutamate 134, glutamate 162, and histidine 348 together coordinate Zn(2+).

It belongs to the peptidase M20A family. DapE subfamily. Homodimer. It depends on Zn(2+) as a cofactor. The cofactor is Co(2+).

It carries out the reaction N-succinyl-(2S,6S)-2,6-diaminopimelate + H2O = (2S,6S)-2,6-diaminopimelate + succinate. It functions in the pathway amino-acid biosynthesis; L-lysine biosynthesis via DAP pathway; LL-2,6-diaminopimelate from (S)-tetrahydrodipicolinate (succinylase route): step 3/3. Catalyzes the hydrolysis of N-succinyl-L,L-diaminopimelic acid (SDAP), forming succinate and LL-2,6-diaminopimelate (DAP), an intermediate involved in the bacterial biosynthesis of lysine and meso-diaminopimelic acid, an essential component of bacterial cell walls. In Histophilus somni (strain 2336) (Haemophilus somnus), this protein is Succinyl-diaminopimelate desuccinylase.